The primary structure comprises 512 residues: Protein OS-9 homolog (512 aa).

Positions 1–17 (MRRFNLILLASLQLVGA) are cleaved as a signal peptide. Positions 71 to 91 (QAREADARDNEAENKDQDGPS) are disordered. Basic and acidic residues predominate over residues 73–88 (READARDNEAENKDQD). An N-linked (GlcNAc...) asparagine glycan is attached at asparagine 118. One can recognise an MRH domain in the interval 149-288 (DSCLYFMSGW…VVNTPRLCND (140 aa)). Cysteine 151 and cysteine 164 are joined by a disulfide. 7 residues coordinate a mannooligosaccharide derivative: tryptophan 158, tryptophan 159, glutamine 171, aspartate 242, arginine 248, glutamate 270, and tyrosine 276. 2 cysteine pairs are disulfide-bonded: cysteine 241-cysteine 274 and cysteine 256-cysteine 286. 2 disordered regions span residues 329–349 (QVPLKQEDTGAKSGDAAPRDV) and 485–512 (AAAKAKGDDEEEVVEGSEEQFFDKKDEL). Residues 492-504 (DDEEEVVEGSEEQ) are compositionally biased toward acidic residues. The short motif at 509 to 512 (KDEL) is the Prevents secretion from ER element.

This sequence belongs to the OS-9 family. Interacts with missfolded ER lumenal proteins.

The protein resides in the endoplasmic reticulum membrane. In terms of biological role, lectin involved in the quality control of the secretory pathway. As a member of the endoplasmic reticulum-associated degradation lumenal (ERAD-L) surveillance system, targets misfolded endoplasmic reticulum lumenal glycoproteins for degradation. The chain is Protein OS-9 homolog (YOS1) from Gibberella zeae (strain ATCC MYA-4620 / CBS 123657 / FGSC 9075 / NRRL 31084 / PH-1) (Wheat head blight fungus).